The chain runs to 484 residues: tRNA-2-methylthio-N(6)-dimethylallyladenosine synthase (484 aa).

Residues G29–A149 enclose the MTTase N-terminal domain. Positions 38, 78, 112, 186, 190, and 193 each coordinate [4Fe-4S] cluster. Residues R172–E401 enclose the Radical SAM core domain. Residues A404 to V474 form the TRAM domain.

This sequence belongs to the methylthiotransferase family. MiaB subfamily. In terms of assembly, monomer. [4Fe-4S] cluster is required as a cofactor.

It localises to the cytoplasm. The catalysed reaction is N(6)-dimethylallyladenosine(37) in tRNA + (sulfur carrier)-SH + AH2 + 2 S-adenosyl-L-methionine = 2-methylsulfanyl-N(6)-dimethylallyladenosine(37) in tRNA + (sulfur carrier)-H + 5'-deoxyadenosine + L-methionine + A + S-adenosyl-L-homocysteine + 2 H(+). In terms of biological role, catalyzes the methylthiolation of N6-(dimethylallyl)adenosine (i(6)A), leading to the formation of 2-methylthio-N6-(dimethylallyl)adenosine (ms(2)i(6)A) at position 37 in tRNAs that read codons beginning with uridine. The polypeptide is tRNA-2-methylthio-N(6)-dimethylallyladenosine synthase (Bifidobacterium longum subsp. infantis (strain ATCC 15697 / DSM 20088 / JCM 1222 / NCTC 11817 / S12)).